Reading from the N-terminus, the 27-residue chain is Phospholipase A2 P-elapitoxin-Aa1a alpha chain (27 aa).

Belongs to the phospholipase A2 family. Group I subfamily. As to quaternary structure, heterotrimer of alpha, beta and gamma chains, each related to PLA2. Ca(2+) is required as a cofactor. Expressed by the venom gland.

It is found in the secreted. It carries out the reaction a 1,2-diacyl-sn-glycero-3-phosphocholine + H2O = a 1-acyl-sn-glycero-3-phosphocholine + a fatty acid + H(+). Heterotrimer: presynaptic neurotoxin. Inhibits nerve-evoked twitch contractions but not responses to cholinergic agonists acetylcholine and carbachol and to depolarizing agonist KCl. Causes a fade in tetanic contractions. Displays a triphasic mode of action with depression, enhancement and blockade of neurotransmission. Does not display myotoxic activity such as changes in baseline muscle tension or inhibition of directly stimulated muscle twitches. All subunits are necessary for maximum toxicity. Its function is as follows. Monomer: Snake venom phospholipase A2 (PLA2) alpha chain that has enzymatic activity. PLA2 catalyzes the calcium-dependent hydrolysis of the 2-acyl groups in 3-sn-phosphoglycerides. The chain is Phospholipase A2 P-elapitoxin-Aa1a alpha chain from Acanthophis antarcticus (Common death adder).